A 126-amino-acid chain; its full sequence is Putative lipoprotein LprD (126 aa).

Residues 1–19 (MSTTRRRRPALVALVTIAA) form the signal peptide. Residue Cys20 is the site of N-palmitoyl cysteine attachment. Cys20 is lipidated: S-diacylglycerol cysteine. The helical transmembrane segment at 44–64 (GYALQWPLFAGFCLYTYHNFV) threads the bilayer.

This sequence to M.tuberculosis Rv1343c.

The protein resides in the cell membrane. The protein is Putative lipoprotein LprD (lprD) of Mycobacterium leprae (strain TN).